The sequence spans 1448 residues: DNA-directed RNA polymerase subunit beta' (1448 aa).

The Zn(2+) site is built by cysteine 66, cysteine 68, cysteine 81, and cysteine 84. The Mg(2+) site is built by aspartate 474, aspartate 476, and aspartate 478. Residues cysteine 814, cysteine 888, cysteine 895, and cysteine 898 each coordinate Zn(2+). The interval 1408–1448 (LEELQAAIGGDGESPSGDGAAGDGAPSEEDVEQIEASGSEN) is disordered.

This sequence belongs to the RNA polymerase beta' chain family. In terms of assembly, the RNAP catalytic core consists of 2 alpha, 1 beta, 1 beta' and 1 omega subunit. When a sigma factor is associated with the core the holoenzyme is formed, which can initiate transcription. Mg(2+) is required as a cofactor. The cofactor is Zn(2+).

It catalyses the reaction RNA(n) + a ribonucleoside 5'-triphosphate = RNA(n+1) + diphosphate. DNA-dependent RNA polymerase catalyzes the transcription of DNA into RNA using the four ribonucleoside triphosphates as substrates. This chain is DNA-directed RNA polymerase subunit beta', found in Salinibacter ruber (strain DSM 13855 / M31).